A 281-amino-acid polypeptide reads, in one-letter code: MSFAMTDPATTMSWVQVIVLSIVQGLTEFLPVSSSGHLRIVSQLFWGEDAGASFTAVIQLGTELAVLVFFAKDIWRILTAWFAGLADKSKRNFDYRMGWMVIAGTIPVGLAGVLLKDLIRENFRNLWITATVLILFSLVFILAERRGKKTRGFEELTMKDAVVMGLWQCLALIPGVSRSGGTISGGLFLNLDREVATRFSFLLAIPAVLASGLFSLPDAFDPQAGQAASGLQLLVGSGIGFVVGYISIAWLLKFVSNHSFAWFAAYRIPLGLLVMALLGLA.

The next 8 helical transmembrane spans lie at 12 to 32 (MSWVQVIVLSIVQGLTEFLPV), 50 to 70 (AGASFTAVIQLGTELAVLVFF), 99 to 119 (WMVIAGTIPVGLAGVLLKDLI), 123 to 143 (FRNLWITATVLILFSLVFILA), 156 to 176 (LTMKDAVVMGLWQCLALIPGV), 199 to 219 (FSFLLAIPAVLASGLFSLPDA), 231 to 251 (LQLLVGSGIGFVVGYISIAWL), and 260 to 280 (FAWFAAYRIPLGLLVMALLGL).

This sequence belongs to the UppP family.

The protein resides in the cell membrane. The enzyme catalyses di-trans,octa-cis-undecaprenyl diphosphate + H2O = di-trans,octa-cis-undecaprenyl phosphate + phosphate + H(+). In terms of biological role, catalyzes the dephosphorylation of undecaprenyl diphosphate (UPP). Confers resistance to bacitracin. In Corynebacterium striatum, this protein is Undecaprenyl-diphosphatase (uppP).